Consider the following 73-residue polypeptide: Translation initiation factor IF-1 (73 aa).

Residues 1 to 73 (MAKKEDTIVL…TKARVVYRHR (73 aa)) form the S1-like domain.

Belongs to the IF-1 family. In terms of assembly, component of the 30S ribosomal translation pre-initiation complex which assembles on the 30S ribosome in the order IF-2 and IF-3, IF-1 and N-formylmethionyl-tRNA(fMet); mRNA recruitment can occur at any time during PIC assembly.

It localises to the cytoplasm. In terms of biological role, one of the essential components for the initiation of protein synthesis. Stabilizes the binding of IF-2 and IF-3 on the 30S subunit to which N-formylmethionyl-tRNA(fMet) subsequently binds. Helps modulate mRNA selection, yielding the 30S pre-initiation complex (PIC). Upon addition of the 50S ribosomal subunit IF-1, IF-2 and IF-3 are released leaving the mature 70S translation initiation complex. This Chlamydia muridarum (strain MoPn / Nigg) protein is Translation initiation factor IF-1.